A 205-amino-acid polypeptide reads, in one-letter code: Protein N-terminal glutamine amidohydrolase (205 aa).

Active-site residues include C20, H74, and D90.

It belongs to the NTAQ1 family. Monomer.

The catalysed reaction is N-terminal L-glutaminyl-[protein] + H2O = N-terminal L-glutamyl-[protein] + NH4(+). Functionally, mediates the side-chain deamidation of N-terminal glutamine residues to glutamate, an important step in N-end rule pathway of protein degradation. Conversion of the resulting N-terminal glutamine to glutamate renders the protein susceptible to arginylation, polyubiquitination and degradation as specified by the N-end rule. Does not act on substrates with internal or C-terminal glutamine and does not act on non-glutamine residues in any position. This chain is Protein N-terminal glutamine amidohydrolase (tun), found in Drosophila virilis (Fruit fly).